A 294-amino-acid chain; its full sequence is tRNA pseudouridine synthase B (294 aa).

D39 acts as the Nucleophile in catalysis.

The protein belongs to the pseudouridine synthase TruB family. Type 1 subfamily.

The enzyme catalyses uridine(55) in tRNA = pseudouridine(55) in tRNA. Functionally, responsible for synthesis of pseudouridine from uracil-55 in the psi GC loop of transfer RNAs. The chain is tRNA pseudouridine synthase B from Streptococcus agalactiae serotype Ia (strain ATCC 27591 / A909 / CDC SS700).